The primary structure comprises 240 residues: MRCRRLCAFDAARGPRRLMRVGLALILVGHVNLLLGAVLHGTVLRHVANPRGAVTPEYTTANVISVGSGLLSVSLGLVALLASRNLFRPRLHWALLALALVNLLLSAACSLGLLLAVSLTVANGGRRLIADCHPGLLDPLVPLDQGSGHADCPFDPTKIYDTALALWIPSVFMSAAEAALSGYCCVAALTLRGVGPCRKDGLQEQLEELTELEFPKRKWQENVQLLDQTREIRTSQKSWV.

4 consecutive transmembrane segments (helical) span residues 21-41 (VGLALILVGHVNLLLGAVLHG), 63-83 (VISVGSGLLSVSLGLVALLAS), 95-115 (LLALALVNLLLSAACSLGLLL), and 163-183 (ALALWIPSVFMSAAEAALSGY).

This sequence belongs to the TMEM54 family.

The protein localises to the membrane. This chain is Keratinocyte-associated protein 3 (KRTCAP3), found in Bos taurus (Bovine).